The chain runs to 183 residues: ADP-ribosylation factor 3 (183 aa).

Gly2 carries N-myristoyl glycine lipidation. Residues 24–31 (GLDKAGKT), 67–71 (DVGGQ), and 126–129 (NKQD) contribute to the GTP site.

The protein belongs to the small GTPase superfamily. Arf family. Interacts with RUD3.

The protein resides in the golgi apparatus. In terms of biological role, GTP-binding protein involved in protein trafficking; may modulate vesicle budding and uncoating within the Golgi apparatus. This chain is ADP-ribosylation factor 3 (ARF3), found in Saccharomyces cerevisiae (strain ATCC 204508 / S288c) (Baker's yeast).